The following is a 313-amino-acid chain: Methylenetetrahydrofolate dehydrogenase [NAD(+)] (313 aa).

Cys-152 is a catalytic residue. NAD(+) is bound by residues 187–188 (RS), 210–211 (DI), and 270–272 (FAG).

Belongs to the tetrahydrofolate dehydrogenase/cyclohydrolase family. In terms of assembly, homodimer.

The enzyme catalyses (6R)-5,10-methylene-5,6,7,8-tetrahydrofolate + NAD(+) = (6R)-5,10-methenyltetrahydrofolate + NADH. It functions in the pathway one-carbon metabolism; tetrahydrofolate interconversion. Functionally, catalyzes oxidation of cytoplasmic one-carbon units for purine biosynthesis. The sequence is that of Methylenetetrahydrofolate dehydrogenase [NAD(+)] (thfA) from Dictyostelium discoideum (Social amoeba).